Here is a 177-residue protein sequence, read N- to C-terminus: UPF0200 protein STK_09500 (177 aa).

11–18 contacts ATP; it reads GMPGSGKG.

The protein belongs to the UPF0200 family.

This chain is UPF0200 protein STK_09500, found in Sulfurisphaera tokodaii (strain DSM 16993 / JCM 10545 / NBRC 100140 / 7) (Sulfolobus tokodaii).